We begin with the raw amino-acid sequence, 711 residues long: Retrovirus-related Pol polyprotein from type-1 retrotransposable element R2 (711 aa).

A Reverse transcriptase domain is found at Leu45–Phe323. The nucleic acid-binding endonuclease stretch occupies residues Leu444–Ala711.

It carries out the reaction DNA(n) + a 2'-deoxyribonucleoside 5'-triphosphate = DNA(n+1) + diphosphate. This is Retrovirus-related Pol polyprotein from type-1 retrotransposable element R2 from Popillia japonica (Japanese beetle).